We begin with the raw amino-acid sequence, 382 residues long: Homeobox protein bagpipe (382 aa).

Disordered stretches follow at residues 27–66 (NDILTRSNPETRRMSSVDSEPEPEKLKPSSDRERSISKSP), 144–178 (TSNDSDCDSPPPLSSSPSESPLSHDGSGLSRKKRS), and 314–382 (QPIP…VEID). Positions 48–62 (EPEKLKPSSDRERSI) are enriched in basic and acidic residues. Low complexity predominate over residues 158–170 (SSPSESPLSHDGS). The segment at residues 175–234 (KKRSRAAFSHAQVFELERRFAQQRYLSGPERSEMAKSLRLTETQVKIWFQNRRYKTKRKQ) is a DNA-binding region (homeobox). Residues 321–335 (QSSSFVTASSASSSP) show a composition bias toward low complexity. Positions 373–382 (EDVDENVEID) are enriched in acidic residues.

The protein belongs to the NK-3 homeobox family. As to expression, is expressed in a segmented pattern in visceral muscle and in a subset of cardiac muscles. Loss of activity results in segmental gaps in midgut visceral muscle.

The protein localises to the nucleus. Its function is as follows. Involved in the determination of cell fates in the dorsal mesoderm. This Drosophila melanogaster (Fruit fly) protein is Homeobox protein bagpipe (bap).